Here is a 157-residue protein sequence, read N- to C-terminus: Crossover junction endodeoxyribonuclease RuvC (157 aa).

Residues Asp7, Glu67, and Asp140 contribute to the active site. Positions 7, 67, and 140 each coordinate Mg(2+).

This sequence belongs to the RuvC family. As to quaternary structure, homodimer which binds Holliday junction (HJ) DNA. The HJ becomes 2-fold symmetrical on binding to RuvC with unstacked arms; it has a different conformation from HJ DNA in complex with RuvA. In the full resolvosome a probable DNA-RuvA(4)-RuvB(12)-RuvC(2) complex forms which resolves the HJ. Mg(2+) is required as a cofactor.

It localises to the cytoplasm. The catalysed reaction is Endonucleolytic cleavage at a junction such as a reciprocal single-stranded crossover between two homologous DNA duplexes (Holliday junction).. The RuvA-RuvB-RuvC complex processes Holliday junction (HJ) DNA during genetic recombination and DNA repair. Endonuclease that resolves HJ intermediates. Cleaves cruciform DNA by making single-stranded nicks across the HJ at symmetrical positions within the homologous arms, yielding a 5'-phosphate and a 3'-hydroxyl group; requires a central core of homology in the junction. The consensus cleavage sequence is 5'-(A/T)TT(C/G)-3'. Cleavage occurs on the 3'-side of the TT dinucleotide at the point of strand exchange. HJ branch migration catalyzed by RuvA-RuvB allows RuvC to scan DNA until it finds its consensus sequence, where it cleaves and resolves the cruciform DNA. The chain is Crossover junction endodeoxyribonuclease RuvC from Rickettsia conorii (strain ATCC VR-613 / Malish 7).